The primary structure comprises 450 residues: Keratin, type I cytoskeletal 25 (450 aa).

A compositionally biased stretch (low complexity) spans 1-23 (MSLRLSSASRRSCPRPTTGSLRL). The tract at residues 1-26 (MSLRLSSASRRSCPRPTTGSLRLSGG) is disordered. Positions 1–78 (MSLRLSSASR…VNERGLLSGN (78 aa)) are head. The coil 1A stretch occupies residues 79–114 (EKVTMQNLNDRLASYLDSVHALEEANADLEQKIKGW). Positions 79–394 (EKVTMQNLND…LLIGGDDGAC (316 aa)) constitute an IF rod domain. The linker 1 stretch occupies residues 115–136 (YEKFGPGSCRGLDHDYSRYFPI). The segment at 137–228 (IDDLKNQIIA…KNHKEEMQVL (92 aa)) is coil 1B. The linker 12 stretch occupies residues 229 to 251 (QCAAGGNVNVEMNAAPGVDLTVL). A coil 2 region spans residues 252–390 (LNNMRAEYEA…ETYCLLIGGD (139 aa)). The tail stretch occupies residues 391 to 450 (DGACKSGGYKSKDYGSGNVGSQVKDSAKAIVVKKVLEEVDQRSKILTTRLRSLEEKSQSN). Position 442 is a phosphoserine (Ser-442).

The protein belongs to the intermediate filament family. Heterodimer of a type I and a type II keratin. Heterodimer with type II keratin KRT5 leading to the formation of keratin intermediate filament (KIF) network. Interacts with KRT6A to form filaments.

It is found in the cytoplasm. Its function is as follows. Essential for the proper assembly of type I and type II keratin protein complexes and formation of keratin intermediate filaments in the inner root sheath (irs). Plays a role in the cytoskeleton organization. This is Keratin, type I cytoskeletal 25 (KRT25) from Pan troglodytes (Chimpanzee).